We begin with the raw amino-acid sequence, 694 residues long: Lamina-associated polypeptide 2, isoform alpha (694 aa).

The region spanning 5-48 (LEDPSVLTKDKLKSELVANNVTLPAGEQRKDVYVQLYLQHLTAR) is the LEM-like domain. Disordered stretches follow at residues 47 to 117 (ARNR…ELTN) and 150 to 209 (REQG…FSEL). The segment at 49–108 (NRPPLPAGTNSKGPPDFSSDEEREPTPVLGSGAAAAGRSRAAVGRKATKKTDKPRQEDKD) is linker. Threonine 57 is subject to Phosphothreonine. Residues serine 59, serine 66, and serine 67 each carry the phosphoserine modification. Threonine 74 is modified (phosphothreonine). The span at 78–93 (GSGAAAAGRSRAAVGR) shows a compositional bias: low complexity. Serine 79 carries the phosphoserine modification. Omega-N-methylarginine is present on residues arginine 86 and arginine 88. Residues 97 to 106 (KKTDKPRQED) are compositionally biased toward basic and acidic residues. Positions 107 to 117 (KDDLDVTELTN) are enriched in acidic residues. The region spanning 109–153 (DLDVTELTNEDLLDQLVKYGVNPGPIVGTTRKLYEKKLLKLREQG) is the LEM domain. A Phosphothreonine modification is found at threonine 154. Polar residues predominate over residues 155–178 (ESRSSTPLPTISSSAENTRQNGSN). A phosphoserine mark is found at serine 156 and serine 159. Phosphothreonine is present on residues threonine 160 and threonine 164. Residues serine 166 and serine 168 each carry the phosphoserine modification. Residues 179 to 191 (DSDRYSDNEEGKK) are compositionally biased toward basic and acidic residues. Residues 190 to 196 (KKKEHKK) carry the Nuclear localization signal motif. Phosphoserine is present on residues serine 272, serine 312, serine 351, serine 354, serine 370, and serine 424. Residues 338–368 (QPLCPERSHISDQSPLSSKRKALEESESSQL) form a disordered region. Residues 558 to 657 (TESCNQQLDL…VGRRYLWLKD (100 aa)) are a coiled coil. Lysine 656 is subject to N6-acetyllysine.

The protein belongs to the LEM family. In terms of assembly, interacts with LMNA, BANF1 and RB1 and with chromosomes. Associates directly or indirectly with lamins at specific cell-cycle stages. Interacts with CMTM6. In terms of processing, phosphorylated in a mitose-specific manner. As to expression, expressed in many tissues. Most abundant in adult thymus and fetal liver.

It is found in the nucleus. Its subcellular location is the chromosome. In terms of biological role, may be involved in the structural organization of the nucleus and in the post-mitotic nuclear assembly. Plays an important role, together with LMNA, in the nuclear anchorage of RB1. Functionally, TP and TP5 may play a role in T-cell development and function. TP5 is an immunomodulating pentapeptide. The protein is Lamina-associated polypeptide 2, isoform alpha (TMPO) of Homo sapiens (Human).